The sequence spans 227 residues: Endolytic peptidoglycan transglycosylase RlpA (227 aa).

Residues 1 to 21 (MMNHKFVLLILLIFYCFFLSG) form the signal peptide. Cysteine 22 carries N-palmitoyl cysteine lipidation. Cysteine 22 is lipidated: S-diacylglycerol cysteine.

It belongs to the RlpA family.

The protein resides in the cell membrane. Lytic transglycosylase with a strong preference for naked glycan strands that lack stem peptides. In Rickettsia bellii (strain RML369-C), this protein is Endolytic peptidoglycan transglycosylase RlpA.